We begin with the raw amino-acid sequence, 238 residues long: Small ribosomal subunit protein uS3 (238 aa).

A KH type-2 domain is found at 39-109 (IRTFINQQLA…TIKVNVVEVN (71 aa)). The segment at 215-238 (EAVPREATRRSPQRRLPQFENRSN) is disordered.

The protein belongs to the universal ribosomal protein uS3 family. As to quaternary structure, part of the 30S ribosomal subunit. Forms a tight complex with proteins S10 and S14.

Binds the lower part of the 30S subunit head. Binds mRNA in the 70S ribosome, positioning it for translation. This chain is Small ribosomal subunit protein uS3, found in Thermosynechococcus vestitus (strain NIES-2133 / IAM M-273 / BP-1).